The following is a 432-amino-acid chain: Adenylosuccinate synthetase (432 aa).

GTP contacts are provided by residues 13–19 (GDEGKGK) and 41–43 (GHT). Asp14 serves as the catalytic Proton acceptor. Asp14 and Gly41 together coordinate Mg(2+). IMP-binding positions include 14-17 (DEGK), 39-42 (NAGH), Thr130, Arg144, Gln225, Thr240, and Arg304. The active-site Proton donor is His42. 300 to 306 (ATTGRRR) is a substrate binding site. GTP is bound by residues Arg306, 332 to 334 (KLD), and 415 to 417 (STG).

Belongs to the adenylosuccinate synthetase family. Homodimer. It depends on Mg(2+) as a cofactor.

Its subcellular location is the cytoplasm. It carries out the reaction IMP + L-aspartate + GTP = N(6)-(1,2-dicarboxyethyl)-AMP + GDP + phosphate + 2 H(+). It functions in the pathway purine metabolism; AMP biosynthesis via de novo pathway; AMP from IMP: step 1/2. Plays an important role in the de novo pathway of purine nucleotide biosynthesis. Catalyzes the first committed step in the biosynthesis of AMP from IMP. In Sodalis glossinidius (strain morsitans), this protein is Adenylosuccinate synthetase.